A 186-amino-acid chain; its full sequence is UPF0461 protein C5orf24 homolog (186 aa).

Over residues 60–69 (NETHLQTSTS) the composition is skewed to polar residues. Residues 60-140 (NETHLQTSTS…AAGYKVSPGR (81 aa)) are disordered. The segment covering 78 to 92 (LKKKKNLGRSGKRGR) has biased composition (basic residues). The segment covering 94-107 (SGTTKSAGYRTSTG) has biased composition (polar residues).

It belongs to the UPF0461 family.

The polypeptide is UPF0461 protein C5orf24 homolog (Xenopus tropicalis (Western clawed frog)).